Reading from the N-terminus, the 185-residue chain is ATP synthase subunit delta (185 aa).

It belongs to the ATPase delta chain family. F-type ATPases have 2 components, F(1) - the catalytic core - and F(0) - the membrane proton channel. F(1) has five subunits: alpha(3), beta(3), gamma(1), delta(1), epsilon(1). F(0) has three main subunits: a(1), b(2) and c(10-14). The alpha and beta chains form an alternating ring which encloses part of the gamma chain. F(1) is attached to F(0) by a central stalk formed by the gamma and epsilon chains, while a peripheral stalk is formed by the delta and b chains.

Its subcellular location is the cell inner membrane. Functionally, f(1)F(0) ATP synthase produces ATP from ADP in the presence of a proton or sodium gradient. F-type ATPases consist of two structural domains, F(1) containing the extramembraneous catalytic core and F(0) containing the membrane proton channel, linked together by a central stalk and a peripheral stalk. During catalysis, ATP synthesis in the catalytic domain of F(1) is coupled via a rotary mechanism of the central stalk subunits to proton translocation. In terms of biological role, this protein is part of the stalk that links CF(0) to CF(1). It either transmits conformational changes from CF(0) to CF(1) or is implicated in proton conduction. This is ATP synthase subunit delta from Phocaeicola vulgatus (strain ATCC 8482 / DSM 1447 / JCM 5826 / CCUG 4940 / NBRC 14291 / NCTC 11154) (Bacteroides vulgatus).